The following is a 281-amino-acid chain: uncharacterized protein (281 aa).

A helical membrane pass occupies residues A5–L27.

The protein resides in the membrane. This is an uncharacterized protein from Acanthamoeba polyphaga mimivirus (APMV).